The chain runs to 26 residues: L-amino-acid oxidase (26 aa).

It belongs to the flavin monoamine oxidase family. As to quaternary structure, monomer. FAD serves as cofactor. Post-translationally, not glycosylated. As to expression, expressed by the ink gland.

It is found in the secreted. It carries out the reaction an L-alpha-amino acid + O2 + H2O = a 2-oxocarboxylate + H2O2 + NH4(+). Catalyzes the oxidative deamination of positively charged L-amino acids L-Lys and L-Arg but not of amino acids L-His, L-Asp or L-Glu. Has antibacterial activity against the Gram-positive bacterium S.aureus (MIC=15 ug/ml). This antibacterial activity is bacteriostatic in the absence of amino acids L-Lys or L-Arg but bactericidal in their presence. The antibacterial effect is largely dependent on H(2)O(2) produced in the oxidative deamination of substrates. Has hemagglutinating activity towards rabbit erythrocytes. Hemagglutinating activity is inhibited by the glycoprotein fetuin, but not by glucose, mannose, galactose, N-acetylglucosamine, N-acetylgalactosamine or sialic acid. The sequence is that of L-amino-acid oxidase from Aplysia dactylomela (Spotted sea hare).